Consider the following 146-residue polypeptide: 16.0 kDa heat shock protein, peroxisomal (146 aa).

The region spanning 23–143 is the sHSP domain; that stretch reads WASASATAAM…RPRTRPIAVS (121 aa). Positions 144–146 match the Microbody targeting signal motif; that stretch reads SKL.

This sequence belongs to the small heat shock protein (HSP20) family. May form oligomeric structures.

Its subcellular location is the peroxisome. This is 16.0 kDa heat shock protein, peroxisomal (HSP16.0) from Oryza sativa subsp. japonica (Rice).